The following is a 404-amino-acid chain: Argininosuccinate synthase (404 aa).

ATP contacts are provided by residues 10-18 (AYSGGLDTS) and A37. Residues Y90 and S95 each coordinate L-citrulline. G120 is an ATP binding site. Residues T122, N126, and D127 each contribute to the L-aspartate site. N126 contributes to the L-citrulline binding site. R130, S181, S190, E266, and Y278 together coordinate L-citrulline.

This sequence belongs to the argininosuccinate synthase family. Type 1 subfamily. Homotetramer.

It is found in the cytoplasm. The enzyme catalyses L-citrulline + L-aspartate + ATP = 2-(N(omega)-L-arginino)succinate + AMP + diphosphate + H(+). Its pathway is amino-acid biosynthesis; L-arginine biosynthesis; L-arginine from L-ornithine and carbamoyl phosphate: step 2/3. The chain is Argininosuccinate synthase from Erythrobacter litoralis (strain HTCC2594).